A 212-amino-acid chain; its full sequence is Uridine kinase (212 aa).

An ATP-binding site is contributed by 13 to 20 (GGSGSGKT).

The protein belongs to the uridine kinase family.

It localises to the cytoplasm. The catalysed reaction is uridine + ATP = UMP + ADP + H(+). It catalyses the reaction cytidine + ATP = CMP + ADP + H(+). It participates in pyrimidine metabolism; CTP biosynthesis via salvage pathway; CTP from cytidine: step 1/3. It functions in the pathway pyrimidine metabolism; UMP biosynthesis via salvage pathway; UMP from uridine: step 1/1. This chain is Uridine kinase, found in Bacillus cereus (strain G9842).